A 424-amino-acid chain; its full sequence is Splicing factor 3B subunit 4 (424 aa).

Ala-2 is modified (N-acetylalanine). RRM domains lie at 13–91 (ATVY…KASA) and 100–179 (ANIF…YAFK). Residue Tyr-56 is modified to Phosphotyrosine. Residues 207-424 (PHQLFADAPP…RGPLRGPLPQ (218 aa)) are disordered. Residues 222 to 231 (NPVVSSLGSG) are compositionally biased toward low complexity. Residues 232-268 (LPPPGMPPPGSFPPPVPPPGALPPGIPPAMPPPPMPP) show a composition bias toward pro residues. 2 stretches are compositionally biased toward low complexity: residues 269–280 (GAAGHGPPSAGT) and 303–323 (HPGMSQMQLAHHGPHGLGHPH). 2 stretches are compositionally biased toward pro residues: residues 332–381 (QPPP…PLMP) and 388–424 (PPRPPPYGYQRGPLPPPRPTPRPPVPPRGPLRGPLPQ).

It belongs to the SF3B4 family. Component of the 17S U2 SnRNP complex, a ribonucleoprotein complex that contains small nuclear RNA (snRNA) U2 and a number of specific proteins. Part of the SF3B subcomplex of the 17S U2 SnRNP complex. SF3B associates with the splicing subcomplex SF3A and a 12S RNA unit to form the U2 small nuclear ribonucleoproteins complex (U2 snRNP). SF3B4 has been found in complex spliceosome 'B' and 'C' as well. Component of the minor (U12-type spliceosome) spliceosome. Found in a complex with PRMT9, SF3B2 and SF3B4.

The protein localises to the nucleus. Component of the 17S U2 SnRNP complex of the spliceosome, a large ribonucleoprotein complex that removes introns from transcribed pre-mRNAs. The 17S U2 SnRNP complex (1) directly participates in early spliceosome assembly and (2) mediates recognition of the intron branch site during pre-mRNA splicing by promoting the selection of the pre-mRNA branch-site adenosine, the nucleophile for the first step of splicing. Within the 17S U2 SnRNP complex, SF3B4 is part of the SF3B subcomplex, which is required for 'A' complex assembly formed by the stable binding of U2 snRNP to the branchpoint sequence in pre-mRNA. Sequence independent binding of SF3A and SF3B subcomplexes upstream of the branch site is essential, it may anchor U2 snRNP to the pre-mRNA. May also be involved in the assembly of the 'E' complex. Also acts as a component of the minor spliceosome, which is involved in the splicing of U12-type introns in pre-mRNAs. The chain is Splicing factor 3B subunit 4 (SF3B4) from Homo sapiens (Human).